The primary structure comprises 327 residues: Ribosomal RNA large subunit methyltransferase F (327 aa).

A disordered region spans residues 1 to 31 (MTHPVTPKNTTRPTPANKPAASTLHPRNPHQ).

Belongs to the methyltransferase superfamily. METTL16/RlmF family.

It is found in the cytoplasm. It catalyses the reaction adenosine(1618) in 23S rRNA + S-adenosyl-L-methionine = N(6)-methyladenosine(1618) in 23S rRNA + S-adenosyl-L-homocysteine + H(+). Its function is as follows. Specifically methylates the adenine in position 1618 of 23S rRNA. This chain is Ribosomal RNA large subunit methyltransferase F, found in Psychrobacter sp. (strain PRwf-1).